Consider the following 179-residue polypeptide: Large ribosomal subunit protein uL5 (179 aa).

The protein belongs to the universal ribosomal protein uL5 family. In terms of assembly, part of the 50S ribosomal subunit; part of the 5S rRNA/L5/L18/L25 subcomplex. Contacts the 5S rRNA and the P site tRNA. Forms a bridge to the 30S subunit in the 70S ribosome.

Its function is as follows. This is one of the proteins that bind and probably mediate the attachment of the 5S RNA into the large ribosomal subunit, where it forms part of the central protuberance. In the 70S ribosome it contacts protein S13 of the 30S subunit (bridge B1b), connecting the 2 subunits; this bridge is implicated in subunit movement. Contacts the P site tRNA; the 5S rRNA and some of its associated proteins might help stabilize positioning of ribosome-bound tRNAs. The sequence is that of Large ribosomal subunit protein uL5 from Thioalkalivibrio sulfidiphilus (strain HL-EbGR7).